Reading from the N-terminus, the 330-residue chain is Aspartate--ammonia ligase (330 aa).

It belongs to the class-II aminoacyl-tRNA synthetase family. AsnA subfamily.

It localises to the cytoplasm. It catalyses the reaction L-aspartate + NH4(+) + ATP = L-asparagine + AMP + diphosphate + H(+). The protein operates within amino-acid biosynthesis; L-asparagine biosynthesis; L-asparagine from L-aspartate (ammonia route): step 1/1. This Streptococcus pyogenes serotype M6 (strain ATCC BAA-946 / MGAS10394) protein is Aspartate--ammonia ligase.